The following is a 310-amino-acid chain: DnaJ-like protein MG002 (310 aa).

The J domain maps to 1 to 66 (MNLYDLLELP…KEKYDSMLKV (66 aa)).

In Mycoplasma genitalium (strain ATCC 33530 / DSM 19775 / NCTC 10195 / G37) (Mycoplasmoides genitalium), this protein is DnaJ-like protein MG002.